The primary structure comprises 367 residues: Uroporphyrinogen decarboxylase (367 aa).

Residue Met1 is modified to N-acetylmethionine. Arg37, Ala39, Arg41, Arg50, Asp86, Tyr164, Ser219, and His339 together coordinate coproporphyrinogen I. Coproporphyrinogen III-binding residues include Arg37, Ala39, and Arg41. Residues Asp86, Tyr164, Ser219, and His339 each contribute to the coproporphyrinogen III site.

The protein belongs to the uroporphyrinogen decarboxylase family. Homodimer.

It is found in the cytoplasm. The protein localises to the cytosol. It carries out the reaction uroporphyrinogen III + 4 H(+) = coproporphyrinogen III + 4 CO2. The catalysed reaction is uroporphyrinogen I + 4 H(+) = coproporphyrinogen I + 4 CO2. The protein operates within porphyrin-containing compound metabolism; protoporphyrin-IX biosynthesis; coproporphyrinogen-III from 5-aminolevulinate: step 4/4. Catalyzes the sequential decarboxylation of the four acetate side chains of uroporphyrinogen to form coproporphyrinogen and participates in the fifth step in the heme biosynthetic pathway. Isomer I or isomer III of uroporphyrinogen may serve as substrate, but only coproporphyrinogen III can ultimately be converted to heme. In vitro also decarboxylates pentacarboxylate porphyrinogen I. The sequence is that of Uroporphyrinogen decarboxylase from Mus musculus (Mouse).